A 335-amino-acid polypeptide reads, in one-letter code: S-adenosylmethionine:tRNA ribosyltransferase-isomerase (335 aa).

This sequence belongs to the QueA family. In terms of assembly, monomer.

Its subcellular location is the cytoplasm. It carries out the reaction 7-aminomethyl-7-carbaguanosine(34) in tRNA + S-adenosyl-L-methionine = epoxyqueuosine(34) in tRNA + adenine + L-methionine + 2 H(+). It participates in tRNA modification; tRNA-queuosine biosynthesis. In terms of biological role, transfers and isomerizes the ribose moiety from AdoMet to the 7-aminomethyl group of 7-deazaguanine (preQ1-tRNA) to give epoxyqueuosine (oQ-tRNA). This is S-adenosylmethionine:tRNA ribosyltransferase-isomerase from Thermosipho africanus (strain TCF52B).